Here is a 345-residue protein sequence, read N- to C-terminus: DNA N(6)-methyladenine demethylase ALKBH1A (345 aa).

Substrate contacts are provided by residues tryptophan 179 and 186–188; that span reads FDW. A Fe2OG dioxygenase domain is found at 225–345; it reads RPEGAIVNYF…RININIRQVF (121 aa). 232 to 234 contributes to the 2-oxoglutarate binding site; sequence NYF. Residues histidine 243, aspartate 245, and histidine 299 each coordinate Fe cation. 336-342 lines the 2-oxoglutarate pocket; sequence RININIR.

The protein belongs to the alkB family. Fe(2+) is required as a cofactor. As to expression, mostly expressed in siliques, to a lower extent in roots, seedlings and rosette leaves, but barely in cauline leaves, stems and flowers.

The protein localises to the nucleus. It is found in the cytoplasm. The enzyme catalyses an N(6)-methyl-2'-deoxyadenosine in DNA + 2-oxoglutarate + O2 = a 2'-deoxyadenosine in DNA + formaldehyde + succinate + CO2. Functionally, dioxygenase that catalyzes DNA N(6)-methyladenine (6 mA) demethylation to modulate gene expression and regulate seed germination. In Arabidopsis thaliana (Mouse-ear cress), this protein is DNA N(6)-methyladenine demethylase ALKBH1A.